The chain runs to 49 residues: Large ribosomal subunit protein bL33B (49 aa).

This sequence belongs to the bacterial ribosomal protein bL33 family.

This is Large ribosomal subunit protein bL33B from Bacillus cytotoxicus (strain DSM 22905 / CIP 110041 / 391-98 / NVH 391-98).